Consider the following 417-residue polypeptide: Serine hydroxymethyltransferase 1 (417 aa).

(6S)-5,6,7,8-tetrahydrofolate-binding positions include Leu-121 and 125 to 127; that span reads GHL. An N6-(pyridoxal phosphate)lysine modification is found at Lys-229. 354 to 356 is a (6S)-5,6,7,8-tetrahydrofolate binding site; it reads SPF.

The protein belongs to the SHMT family. In terms of assembly, homodimer. Requires pyridoxal 5'-phosphate as cofactor.

The protein localises to the cytoplasm. It catalyses the reaction (6R)-5,10-methylene-5,6,7,8-tetrahydrofolate + glycine + H2O = (6S)-5,6,7,8-tetrahydrofolate + L-serine. It participates in one-carbon metabolism; tetrahydrofolate interconversion. Its pathway is amino-acid biosynthesis; glycine biosynthesis; glycine from L-serine: step 1/1. Catalyzes the reversible interconversion of serine and glycine with tetrahydrofolate (THF) serving as the one-carbon carrier. This reaction serves as the major source of one-carbon groups required for the biosynthesis of purines, thymidylate, methionine, and other important biomolecules. Also exhibits THF-independent aldolase activity toward beta-hydroxyamino acids, producing glycine and aldehydes, via a retro-aldol mechanism. This Pseudomonas fluorescens (strain ATCC BAA-477 / NRRL B-23932 / Pf-5) protein is Serine hydroxymethyltransferase 1.